A 161-amino-acid polypeptide reads, in one-letter code: Eukaryotic translation initiation factor 5A-1 (161 aa).

Basic and acidic residues predominate over residues 1–12; sequence MSDEEHQFESKA. The interval 1 to 21 is disordered; it reads MSDEEHQFESKADAGASKTYP. The residue at position 52 (lysine 52) is a Hypusine.

It belongs to the eIF-5A family. Lys-52 undergoes hypusination, a unique post-translational modification that consists in the addition of a butylamino group from spermidine to lysine side chain, leading to the formation of the unusual amino acid hypusine. eIF-5As are the only known proteins to undergo this modification, which is essential for their function.

Its function is as follows. Translation factor that promotes translation elongation and termination, particularly upon ribosome stalling at specific amino acid sequence contexts. Binds between the exit (E) and peptidyl (P) site of the ribosome and promotes rescue of stalled ribosome: specifically required for efficient translation of polyproline-containing peptides as well as other motifs that stall the ribosome. Acts as a ribosome quality control (RQC) cofactor by joining the RQC complex to facilitate peptidyl transfer during CAT tailing step. In Medicago sativa (Alfalfa), this protein is Eukaryotic translation initiation factor 5A-1.